The primary structure comprises 229 residues: Glutathione S-transferase 1 (229 aa).

The region spanning 2–83 (SPVKVFGHPM…YILRKYGGTA (82 aa)) is the GST N-terminal domain. Residues 41 to 42 (HK), 54 to 55 (KM), and 67 to 68 (ES) each bind glutathione. In terms of domain architecture, GST C-terminal spans 93 to 223 (GIEELAMVDV…RVCKHMPTEF (131 aa)).

The protein belongs to the GST superfamily. Phi family.

It carries out the reaction RX + glutathione = an S-substituted glutathione + a halide anion + H(+). Its function is as follows. Conjugation of reduced glutathione to a wide number of exogenous and endogenous hydrophobic electrophiles. The chain is Glutathione S-transferase 1 (GSTA1) from Triticum aestivum (Wheat).